A 209-amino-acid polypeptide reads, in one-letter code: uncharacterized protein (209 aa).

A signal peptide spans 1–17; it reads MKRLVTGLLALSLFLAA. Residues 17–105 form a disordered region; that stretch reads ACGQDSDQQK…SNNQANNNQK (89 aa). Cys18 carries N-palmitoyl cysteine lipidation. Cys18 carries the S-diacylglycerol cysteine lipid modification. Over residues 23–70 the composition is skewed to basic and acidic residues; the sequence is DQQKDGNKEKDDKAKTEQQDKKTNDSSKDKKDNKDDSKDVNKDNKDNS. A compositionally biased stretch (low complexity) spans 71–105; sequence ANDNQQQSNSNATNNDQNQTNNNQSSNNQANNNQK.

It is found in the cell membrane. This is an uncharacterized protein from Staphylococcus aureus (strain COL).